Reading from the N-terminus, the 429-residue chain is Cyclin-B2-2 (429 aa).

The segment at 66-98 (SQRKQESCDKKKLDSLHPSISRSQEETKKLKPS) is disordered. Residues 68–80 (RKQESCDKKKLDS) are compositionally biased toward basic and acidic residues.

Belongs to the cyclin family. Cyclin AB subfamily. Interacts with CDC20-1 and CDC20-2. In terms of tissue distribution, expressed in roots.

This chain is Cyclin-B2-2 (CYCB2-2), found in Arabidopsis thaliana (Mouse-ear cress).